The primary structure comprises 288 residues: Syntaxin PEP12 (288 aa).

Over Met1 to Arg268 the chain is Cytoplasmic. Phosphoserine occurs at positions 2 and 23. One can recognise a t-SNARE coiled-coil homology domain in the interval Gln195–Ala257. Residues Val269–Leu288 form a helical; Anchor for type IV membrane protein membrane-spanning segment.

This sequence belongs to the syntaxin family. Post-translationally, ubiquitinated.

Its subcellular location is the membrane. Functionally, plays a role in the sorting and targeting of vacuolar proteases. This Saccharomyces cerevisiae (strain ATCC 204508 / S288c) (Baker's yeast) protein is Syntaxin PEP12 (PEP12).